The chain runs to 227 residues: Ribonuclease 3 (227 aa).

One can recognise an RNase III domain in the interval 4-133 (FETLEKLLSY…LIAAIYLDSN (130 aa)). Residue glutamate 46 coordinates Mg(2+). The active site involves aspartate 50. Mg(2+)-binding residues include asparagine 119 and glutamate 122. Residue glutamate 122 is part of the active site. Positions 158–226 (DPKTALQEWA…ARSLLHRLKN (69 aa)) constitute a DRBM domain.

This sequence belongs to the ribonuclease III family. In terms of assembly, homodimer. It depends on Mg(2+) as a cofactor.

It localises to the cytoplasm. The enzyme catalyses Endonucleolytic cleavage to 5'-phosphomonoester.. Digests double-stranded RNA. Involved in the processing of primary rRNA transcript to yield the immediate precursors to the large and small rRNAs (23S and 16S). Processes some mRNAs, and tRNAs when they are encoded in the rRNA operon. Processes pre-crRNA and tracrRNA of type II CRISPR loci if present in the organism. The protein is Ribonuclease 3 of Rickettsia massiliae (strain Mtu5).